Consider the following 92-residue polypeptide: MSELEKAMVALIDVFHQYSGREGDKHKLKKSELKELINNELSHFLEEIKEQEVVDKVMETLDEDGDGECDFQEFMAFVAMVTTACHEFFEHE.

An N-acetylserine modification is found at serine 2. EF-hand domains are found at residues 13-48 and 49-84; these read DVFH…LEEI and KEQE…VTTA. Histidine 16 contributes to the Zn(2+) binding site. Positions 19, 22, and 24 each coordinate Ca(2+). Histidine 26 lines the Zn(2+) pocket. 5 residues coordinate Ca(2+): aspartate 62, aspartate 64, aspartate 66, glutamate 68, and glutamate 73. Zn(2+)-binding residues include histidine 86 and histidine 91.

Belongs to the S-100 family. As to quaternary structure, dimer of either two alpha chains, or two beta chains, or one alpha and one beta chain. The S100B dimer binds two molecules of STK38. Interacts with CACYBP in a calcium-dependent manner. Interacts with ATAD3A; this interaction probably occurs in the cytosol prior to ATAD3A mitochondrial targeting. Interacts with S100A6. The S100B dimer interacts with two molecules of CAPZA1. Interacts with AGER. Interacts with PPP5C (via TPR repeats); the interaction is calcium-dependent and modulates PPP5C activity. Interacts with TPPP; this interaction inhibits TPPP dimerization. Interacts with isoform CLSTN3beta of CLSTN3; interaction promotes secretion.

The protein resides in the cytoplasm. The protein localises to the nucleus. It is found in the secreted. Functionally, small zinc- and- and calcium-binding protein that is highly expressed in astrocytes and constitutes one of the most abundant soluble proteins in brain. Weakly binds calcium but binds zinc very tightly-distinct binding sites with different affinities exist for both ions on each monomer. Physiological concentrations of potassium ion antagonize the binding of both divalent cations, especially affecting high-affinity calcium-binding sites. Acts as a neurotrophic factor that promotes astrocytosis and axonal proliferation. Involved in innervation of thermogenic adipose tissue by acting as an adipocyte-derived neurotrophic factor that promotes sympathetic innervation of adipose tissue. Binds to and initiates the activation of STK38 by releasing autoinhibitory intramolecular interactions within the kinase. Interaction with AGER after myocardial infarction may play a role in myocyte apoptosis by activating ERK1/2 and p53/TP53 signaling. Could assist ATAD3A cytoplasmic processing, preventing aggregation and favoring mitochondrial localization. May mediate calcium-dependent regulation on many physiological processes by interacting with other proteins, such as TPR-containing proteins, and modulating their activity. The chain is Protein S100-B from Mus musculus (Mouse).